The following is a 68-amino-acid chain: Beta-toxin Cl13 (68 aa).

The region spanning 1–66 is the LCN-type CS-alpha/beta domain; it reads KEGYLVDYHT…VWPLPNKRCK (66 aa). Cystine bridges form between cysteine 12-cysteine 65, cysteine 16-cysteine 41, cysteine 25-cysteine 46, and cysteine 29-cysteine 48. Lysine 66 is subject to Lysine amide.

This sequence belongs to the long (4 C-C) scorpion toxin superfamily. Sodium channel inhibitor family. Beta subfamily. As to expression, expressed by the venom gland.

It is found in the secreted. In terms of biological role, beta toxins bind voltage-independently at site-4 of sodium channels (Nav) and shift the voltage of activation toward more negative potentials thereby affecting sodium channel activation and promoting spontaneous and repetitive firing. Inhibits sodium channels Nav1.4/SCN4A, Nav1.5/SCN5A and Nav1.6/SCN8A. Also has a weak inhibitory effect on Nav1.2/SCN2A. Is lethal to mice. The sequence is that of Beta-toxin Cl13 from Centruroides limpidus (Mexican scorpion).